The sequence spans 189 residues: MAKVNLEQIEHAVRLILEAIGDDPNREGVLDTPKRVAKMYAEVFSGMHEDPKEHLHKVFGEDHEELVLVKDIPFYSMCEHHLVPFYGVAHVAYIPQGGKVTGLSKLARTVDTIARRPQLQERITSTVANSIMEVLEPHGVMVVVEAEHMCMTMRGVKKPGAKTVTTAVRGVLENDAAARSEILSFIKTN.

Residues Cys-78, His-81, and Cys-150 each contribute to the Zn(2+) site.

Belongs to the GTP cyclohydrolase I family. In terms of assembly, homomer.

The enzyme catalyses GTP + H2O = 7,8-dihydroneopterin 3'-triphosphate + formate + H(+). It functions in the pathway cofactor biosynthesis; 7,8-dihydroneopterin triphosphate biosynthesis; 7,8-dihydroneopterin triphosphate from GTP: step 1/1. In Bacillus mycoides (strain KBAB4) (Bacillus weihenstephanensis), this protein is GTP cyclohydrolase 1.